The sequence spans 224 residues: UPF0758 protein PM1152 (224 aa).

One can recognise an MPN domain in the interval 102–224 (AFKNSENVRF…YYSFAENRLL (123 aa)). Zn(2+)-binding residues include His173, His175, and Asp186. The JAMM motif signature appears at 173–186 (HNHPSGNPEPSASD).

It belongs to the UPF0758 family.

This chain is UPF0758 protein PM1152, found in Pasteurella multocida (strain Pm70).